A 439-amino-acid polypeptide reads, in one-letter code: N5-carboxyaminoimidazole ribonucleotide synthase (439 aa).

Residues lysine 113, lysine 160, 197–200 (EERV), glutamate 205, and 283–284 (NE) each bind ATP. In terms of domain architecture, ATP-grasp spans 117 to 313 (RRRLAALGAA…QFEQHLRAVL (197 aa)).

The protein belongs to the PurK/PurT family. As to quaternary structure, homodimer.

It carries out the reaction 5-amino-1-(5-phospho-beta-D-ribosyl)imidazole + hydrogencarbonate + ATP = 5-carboxyamino-1-(5-phospho-D-ribosyl)imidazole + ADP + phosphate + 2 H(+). It functions in the pathway purine metabolism; IMP biosynthesis via de novo pathway; 5-amino-1-(5-phospho-D-ribosyl)imidazole-4-carboxylate from 5-amino-1-(5-phospho-D-ribosyl)imidazole (N5-CAIR route): step 1/2. In terms of biological role, catalyzes the ATP-dependent conversion of 5-aminoimidazole ribonucleotide (AIR) and HCO(3)(-) to N5-carboxyaminoimidazole ribonucleotide (N5-CAIR). This Mycobacterium leprae (strain TN) protein is N5-carboxyaminoimidazole ribonucleotide synthase.